The chain runs to 259 residues: Histidinol-phosphatase (259 aa).

The Mg(2+) site is built by Glu66, Asp82, Ile84, Asp85, and Asp207. Substrate is bound at residue Glu66. Substrate-binding positions include 84–87 and Asp207; that span reads IDGT.

It belongs to the inositol monophosphatase superfamily. It depends on Mg(2+) as a cofactor.

The enzyme catalyses L-histidinol phosphate + H2O = L-histidinol + phosphate. It functions in the pathway amino-acid biosynthesis; L-histidine biosynthesis; L-histidine from 5-phospho-alpha-D-ribose 1-diphosphate: step 8/9. Functionally, catalyzes the dephosphorylation of histidinol-phosphate to histidinol, the direct precursor of histidine. This is Histidinol-phosphatase (hisN) from Chlorobaculum parvum (strain DSM 263 / NCIMB 8327) (Chlorobium vibrioforme subsp. thiosulfatophilum).